Here is a 376-residue protein sequence, read N- to C-terminus: Protein-tyrosine sulfotransferase 2 (376 aa).

Over 1 to 8 (MRLSVRKV) the chain is Cytoplasmic. The chain crosses the membrane as a helical; Signal-anchor for type II membrane protein span at residues 9-25 (LLAAGCALALVLAVQLG). Residues 26 to 376 (QQVLECRAVL…NSTSPHLGSS (351 aa)) are Lumenal-facing. 77-81 (RSGTT) is a binding site for 3'-phosphoadenylyl sulfate. Cysteine 95 and cysteine 155 are joined by a disulfide. Glutamate 98 (proton donor/acceptor) is an active-site residue. The tract at residues 100 to 104 (RIIPR) is interaction with peptide substrate. Positions 182, 190, and 194 each coordinate 3'-phosphoadenylyl sulfate. An intrachain disulfide couples cysteine 224 to cysteine 232. Residues tyrosine 237, 284–293 (STDQVIKPVN), and lysine 299 contribute to the 3'-phosphoadenylyl sulfate site. 2 N-linked (GlcNAc...) asparagine glycosylation sites follow: asparagine 342 and asparagine 367.

Belongs to the protein sulfotransferase family. Homodimer. Can also form heterodimers with TPST1. In terms of processing, N-glycosylated. As to expression, widely expressed.

The protein resides in the golgi apparatus membrane. It catalyses the reaction L-tyrosyl-[protein] + 3'-phosphoadenylyl sulfate = O-sulfo-L-tyrosine-[protein] + adenosine 3',5'-bisphosphate + H(+). In terms of biological role, catalyzes the O-sulfation of tyrosine residues within acidic motifs of polypeptides, using 3'-phosphoadenylyl sulfate (PAPS) as cosubstrate. This Mus musculus (Mouse) protein is Protein-tyrosine sulfotransferase 2 (Tpst2).